Consider the following 237-residue polypeptide: Phosphoribosylaminoimidazole-succinocarboxamide synthase (237 aa).

This sequence belongs to the SAICAR synthetase family.

The enzyme catalyses 5-amino-1-(5-phospho-D-ribosyl)imidazole-4-carboxylate + L-aspartate + ATP = (2S)-2-[5-amino-1-(5-phospho-beta-D-ribosyl)imidazole-4-carboxamido]succinate + ADP + phosphate + 2 H(+). It functions in the pathway purine metabolism; IMP biosynthesis via de novo pathway; 5-amino-1-(5-phospho-D-ribosyl)imidazole-4-carboxamide from 5-amino-1-(5-phospho-D-ribosyl)imidazole-4-carboxylate: step 1/2. This is Phosphoribosylaminoimidazole-succinocarboxamide synthase from Oceanobacillus iheyensis (strain DSM 14371 / CIP 107618 / JCM 11309 / KCTC 3954 / HTE831).